A 576-amino-acid polypeptide reads, in one-letter code: Arginine--tRNA ligase (576 aa).

A 'HIGH' region motif is present at residues Pro-122–His-132.

Belongs to the class-I aminoacyl-tRNA synthetase family. As to quaternary structure, monomer.

The protein resides in the cytoplasm. The enzyme catalyses tRNA(Arg) + L-arginine + ATP = L-arginyl-tRNA(Arg) + AMP + diphosphate. This Erwinia tasmaniensis (strain DSM 17950 / CFBP 7177 / CIP 109463 / NCPPB 4357 / Et1/99) protein is Arginine--tRNA ligase.